The chain runs to 539 residues: Membrane protein insertase YidC (539 aa).

A helical membrane pass occupies residues 6–26 (NILLIALALVSFLLFQQWNVA). The span at 35–44 (EQAQSGSTLP) shows a compositional bias: polar residues. The segment at 35-55 (EQAQSGSTLPAPSYADDLDPA) is disordered. The next 4 membrane-spanning stretches (helical) occupy residues 341–361 (SFIQ…TFIV), 416–436 (LGGC…YWAL), 454–474 (LSAQ…MFLI), and 495–515 (PVMF…YWLV).

It belongs to the OXA1/ALB3/YidC family. Type 1 subfamily. In terms of assembly, interacts with the Sec translocase complex via SecD. Specifically interacts with transmembrane segments of nascent integral membrane proteins during membrane integration.

It is found in the cell inner membrane. Its function is as follows. Required for the insertion and/or proper folding and/or complex formation of integral membrane proteins into the membrane. Involved in integration of membrane proteins that insert both dependently and independently of the Sec translocase complex, as well as at least some lipoproteins. Aids folding of multispanning membrane proteins. The sequence is that of Membrane protein insertase YidC from Vibrio atlanticus (strain LGP32) (Vibrio splendidus (strain Mel32)).